An 861-amino-acid chain; its full sequence is Leucine--tRNA ligase (861 aa).

Positions 42–52 (PYPSGRIHMGH) match the 'HIGH' region motif. A 'KMSKS' region motif is present at residues 623-627 (KMSKS). Lysine 626 is a binding site for ATP.

It belongs to the class-I aminoacyl-tRNA synthetase family.

It localises to the cytoplasm. The enzyme catalyses tRNA(Leu) + L-leucine + ATP = L-leucyl-tRNA(Leu) + AMP + diphosphate. The chain is Leucine--tRNA ligase from Caulobacter sp. (strain K31).